The following is a 457-amino-acid chain: Adenylyltransferase and sulfurtransferase MOCS3 (457 aa).

The tract at residues 40–60 is disordered; sequence ANGGGNGDGLADEGGERNTGT. Thr-63 carries the phosphothreonine modification. ATP-binding positions include Gly-102, Asp-123, 130 to 134, Lys-147, and 191 to 192; these read SNFHR and DN. 2 residues coordinate Zn(2+): Cys-233 and Cys-236. The Glycyl thioester intermediate; for adenylyltransferase activity role is filled by Cys-250. Positions 309 and 312 each coordinate Zn(2+). Residues 358-455 form the Rhodanese domain; it reads ESQPHLLFDV…WTRKVDPDFP (98 aa). Cys-414 functions as the Cysteine persulfide intermediate; for sulfurtransferase activity in the catalytic mechanism.

It in the N-terminal section; belongs to the HesA/MoeB/ThiF family. UBA4 subfamily. It depends on Zn(2+) as a cofactor.

The protein localises to the cytoplasm. The protein resides in the cytosol. It catalyses the reaction [molybdopterin-synthase sulfur-carrier protein]-C-terminal Gly-Gly + ATP + H(+) = [molybdopterin-synthase sulfur-carrier protein]-C-terminal Gly-Gly-AMP + diphosphate. The enzyme catalyses [molybdopterin-synthase sulfur-carrier protein]-C-terminal Gly-Gly-AMP + S-sulfanyl-L-cysteinyl-[cysteine desulfurase] + AH2 = [molybdopterin-synthase sulfur-carrier protein]-C-terminal-Gly-aminoethanethioate + L-cysteinyl-[cysteine desulfurase] + A + AMP + 2 H(+). Its pathway is tRNA modification; 5-methoxycarbonylmethyl-2-thiouridine-tRNA biosynthesis. It functions in the pathway cofactor biosynthesis; molybdopterin biosynthesis. Plays a central role in 2-thiolation of mcm(5)S(2)U at tRNA wobble positions of cytosolic tRNA(Lys), tRNA(Glu) and tRNA(Gln). Also essential during biosynthesis of the molybdenum cofactor. Acts by mediating the C-terminal thiocarboxylation of sulfur carriers URM1 and MOCS2A. Its N-terminus first activates URM1 and MOCS2A as acyl-adenylates (-COAMP), then the persulfide sulfur on the catalytic cysteine is transferred to URM1 and MOCS2A to form thiocarboxylation (-COSH) of their C-terminus. The reaction probably involves hydrogen sulfide that is generated from the persulfide intermediate and that acts as a nucleophile towards URM1 and MOCS2A. Subsequently, a transient disulfide bond is formed. Does not use thiosulfate as sulfur donor; NFS1 probably acting as a sulfur donor for thiocarboxylation reactions. This is Adenylyltransferase and sulfurtransferase MOCS3 from Drosophila willistoni (Fruit fly).